Reading from the N-terminus, the 420-residue chain is Septin-8-A (420 aa).

Positions 39 to 305 (QGFCFNILCV…ELYRRCKLEE (267 aa)) constitute a Septin-type G domain. Residues 49 to 56 (GETGIGKS) form a G1 motif region. GTP-binding positions include 49–56 (GETGIGKS), Gly104, 185–193 (KADTISKSE), Gly239, and Arg254. Residues 101-104 (DTVG) form a G3 motif region. Positions 184–187 (AKAD) are G4 motif. A coiled-coil region spans residues 321-407 (QETYEAKRKE…RRKVAAETLS (87 aa)). Positions 393 to 420 (MNAFNRRKVAAETLSLSQPLKKDKDKKN) are disordered.

This sequence belongs to the TRAFAC class TrmE-Era-EngA-EngB-Septin-like GTPase superfamily. Septin GTPase family.

In Danio rerio (Zebrafish), this protein is Septin-8-A (sept8a).